Here is a 989-residue protein sequence, read N- to C-terminus: Clumping factor A (989 aa).

A signal peptide spans 1–39 (MNMKKKEKHAIRKKSIGVASVLVGTLIGFGLLSSKEADA). The YSIRK-G/S signaling motif signature appears at 9-20 (HAIRKKSIGVAS). 2 disordered regions span residues 34–205 (SKEA…VSQA) and 529–960 (FNNG…SEDE). Positions 40 to 542 (SENSVTQSDS…SGSGDGIDKP (503 aa)) are ligand binding A region. Positions 47–65 (SDSASNESKSNDSSSVSAA) are enriched in low complexity. The span at 71-105 (TNVSDTKTSSNTNNGETSVAQNPAQQETTQSSSTN) shows a compositional bias: polar residues. Composition is skewed to low complexity over residues 106 to 132 (ATTEETPVTGEATTTTTNQANTPATTQ) and 143 to 162 (NQTSNETTSNDTNTVSSVNS). Residues 163–205 (PQNSTNAENVSTTQDTSTEATPSNNESAPQNTDASNKDVVSQA) are compositionally biased toward polar residues. The span at 547–565 (QPDEPGEIEPIPEDSDSDP) shows a compositional bias: acidic residues. Residues 566 to 598 (GSDSGSDSNSDSGSDSGSDSTSDSGSDSASDSD) are compositionally biased toward low complexity. Residues 599 to 917 (SASDSDSASD…DNDSDSDSNS (319 aa)) show a composition bias toward acidic residues. Over residues 918 to 936 (DSESGSNNNVVPPNSPKNG) the composition is skewed to low complexity. The span at 943–952 (NEAKDSKEPL) shows a compositional bias: basic and acidic residues. The LPXTG sorting signal motif lies at 952–956 (LPDTG). At Thr955 the chain carries Pentaglycyl murein peptidoglycan amidated threonine. Residues 956–989 (GSEDEANTSLIWGLLASLGSLLLFRRKKENKDKK) constitute a propeptide, removed by sortase.

This sequence belongs to the serine-aspartate repeat-containing protein (SDr) family.

The protein localises to the secreted. It is found in the cell wall. In terms of biological role, cell surface-associated protein implicated in virulence. Promotes bacterial attachment exclusively to the gamma-chain of human fibrinogen. Induces formation of bacterial clumps, which diminish the ability of group IIA phospholipase A2 to cause bacterial phospholipid hydrolysis and killing. Significantly decreases macrophage phagocytosis possibly thanks to the clumps, clumped bacteria being too large to be phagocytosed. Dominant factor responsible for human platelet aggregation, which may be an important mechanism for initiating infective endocarditis. The protein is Clumping factor A (clfA) of Staphylococcus aureus (strain N315).